The following is a 741-amino-acid chain: Mitofusin-1 (741 aa).

Topologically, residues 1-584 are cytoplasmic; the sequence is MAETVSPLKH…AAQEELMITL (584 aa). A part of a helix bundle domain, formed by helices from N-terminal and C-terminal regions region spans residues 9–73; sequence KHFVLAKKAI…LAVIGEVLSR (65 aa). The Dynamin-type G domain maps to 72-321; the sequence is SRRHMKVAFF…ARLQEFQNFE (250 aa). Residues 82-89 are G1 motif; it reads GRTSSGKS. 85 to 90 provides a ligand contact to GTP; the sequence is SSGKSS. The tract at residues 108-109 is G2 motif; sequence TT. Residues 178 to 181 are G3 motif; it reads DSPG. 237–240 provides a ligand contact to GTP; the sequence is NRWD. The segment at 237 to 240 is G4 motif; the sequence is NRWD. Position 266 (E266) is a region of interest, G5 motif. GTP contacts are provided by S284 and K286. The interval 338-364 is part of a helix bundle domain, formed by helices from N-terminal and C-terminal regions; it reads EQHTIRAKQILDTVKNILDSVNVAAAE. The stretch at 371–408 forms a coiled coil; sequence EEREDQIDRLDFIRNQMNLLTLDVKKKIKEVTEEVANK. Residues 585–605 traverse the membrane as a helical segment; sequence ITGLASLTSRTSMGIIVVGGV. Topologically, residues 606 to 608 are mitochondrial intermembrane; sequence IWK. The helical transmembrane segment at 609 to 629 threads the bilayer; sequence TVGWKLISVTLSMYGALYLYE. At 630-741 the chain is on the cytoplasmic side; the sequence is RLTWTTRAKE…QFLHPSSGES (112 aa). Positions 677 to 735 form a coiled coil; it reads FARLCQQVDVTQKHLEEEIARLSKEIDQLEKIQNNSKLLRNKAVQLESELENFSKQFLH. The segment at 703-734 is part of a helix bundle domain, formed by helices from N-terminal and C-terminal regions; it reads DQLEKIQNNSKLLRNKAVQLESELENFSKQFL.

The protein belongs to the TRAFAC class dynamin-like GTPase superfamily. Dynamin/Fzo/YdjA family. Mitofusin subfamily. Homodimer, also in the absence of bound GTP. Forms higher oligomers in the presence of a transition state GTP analog. Forms homomultimers and heteromultimers with MFN2. Oligomerization is essential for mitochondrion fusion. Component of a high molecular weight multiprotein complex. Interacts with VAT1. Interacts with THG1L; THG1L probably functions as a guanyl-nucleotide exchange factor/GEF, activating MFN1. Ubiquitinated by MARCHF5. When mitochondria are depolarized and dysfunctional, it is ubiquitinated by a SCF (SKP1-CUL1-F-box protein) E3 ubiquitin-protein ligase complex that contains FBXO7 and PRKN. Ubiquitinated by non-degradative ubiquitin by PRKN, promoting mitochondrial fusion; deubiquitination by USP30 inhibits mitochondrial fusion. As to expression, detected in adult heart. Detected in embryos (at protein level). Widely expressed.

The protein resides in the mitochondrion outer membrane. It carries out the reaction GTP + H2O = GDP + phosphate + H(+). Its function is as follows. Mitochondrial outer membrane GTPase that mediates mitochondrial clustering and fusion. Membrane clustering requires GTPase activity. It may involve a major rearrangement of the coiled coil domains. Mitochondria are highly dynamic organelles, and their morphology is determined by the equilibrium between mitochondrial fusion and fission events. Overexpression induces the formation of mitochondrial networks (in vitro). Has low GTPase activity. The sequence is that of Mitofusin-1 (Mfn1) from Mus musculus (Mouse).